A 79-amino-acid chain; its full sequence is Small ribosomal subunit protein bS18 (79 aa).

The protein belongs to the bacterial ribosomal protein bS18 family. Part of the 30S ribosomal subunit. Forms a tight heterodimer with protein bS6.

Functionally, binds as a heterodimer with protein bS6 to the central domain of the 16S rRNA, where it helps stabilize the platform of the 30S subunit. This is Small ribosomal subunit protein bS18 from Bradyrhizobium diazoefficiens (strain JCM 10833 / BCRC 13528 / IAM 13628 / NBRC 14792 / USDA 110).